Here is a 76-residue protein sequence, read N- to C-terminus: uncharacterized protein (76 aa).

This is an uncharacterized protein from Escherichia coli (strain K12).